A 128-amino-acid chain; its full sequence is Natriuretic peptides A (128 aa).

Residues 36 to 84 form a disordered region; the sequence is QVASEQNEEAGAVLSALPEVPSWPGEAGPAQREGGALGRGPWDSSDRSA. Positions 68 to 78 are excised as a propeptide; it reads EGGALGRGPWD. Serine 104 carries the phosphoserine modification. Cysteine 105 and cysteine 121 are oxidised to a cystine. Residues 122-126 are important for degradation of atrial natriuretic peptide by IDE; sequence NSFRY.

Belongs to the natriuretic peptide family. As to quaternary structure, homodimer; disulfide-linked antiparallel dimer. Post-translationally, the precursor molecule is proteolytically cleaved by CORIN at Arg-98 to produce atrial natriuretic peptide. Undergoes further proteolytic cleavage by unknown proteases to give rise to long-acting natriuretic peptide, vessel dilator and kaliuretic peptide. Additional processing gives rise to the auriculin and atriopeptin peptides. In the kidneys, alternative processing by an unknown protease results in the peptide urodilatin. Cleavage by MME initiates degradation of the factor and thereby regulates its activity. Degraded by IDE (in vitro). During IDE degradation, the resulting products can temporarily stimulate NPR2 to produce cGMP, before the fragments are completely degraded and inactivated by IDE (in vitro). In terms of processing, degraded by IDE. Post-translationally, phosphorylation on Ser-104 decreases vasorelaxant activity.

Its subcellular location is the secreted. The protein resides in the perikaryon. It localises to the cell projection. In terms of biological role, hormone that plays a key role in mediating cardio-renal homeostasis, and is involved in vascular remodeling and regulating energy metabolism. Acts by specifically binding and stimulating NPR1 to produce cGMP, which in turn activates effector proteins, such as PRKG1, that drive various biological responses. Regulates vasodilation, natriuresis, diuresis and aldosterone synthesis and is therefore essential for regulating blood pressure, controlling the extracellular fluid volume and maintaining the fluid-electrolyte balance. Also involved in inhibiting cardiac remodeling and cardiac hypertrophy by inducing cardiomyocyte apoptosis and attenuating the growth of cardiomyocytes and fibroblasts. Plays a role in female pregnancy by promoting trophoblast invasion and spiral artery remodeling in uterus, and thus prevents pregnancy-induced hypertension. In adipose tissue, acts in various cGMP- and PKG-dependent pathways to regulate lipid metabolism and energy homeostasis. This includes up-regulating lipid metabolism and mitochondrial oxygen utilization by activating the AMP-activated protein kinase (AMPK), and increasing energy expenditure by acting via MAPK11 to promote the UCP1-dependent thermogenesis of brown adipose tissue. Binds the clearance receptor NPR3 which removes the hormone from circulation. Functionally, may have a role in cardio-renal homeostasis through regulation of natriuresis, diuresis, vasodilation, and inhibiting aldosterone synthesis. In vitro, promotes the production of cGMP and induces vasodilation. May promote natriuresis, at least in part, by enhancing prostaglandin E2 synthesis resulting in the inhibition of renal Na+-K+-ATPase. However reports on the involvement of this peptide in mammal blood volume and blood pressure homeostasis are conflicting; according to a report, in vivo it is not sufficient to activate cGMP and does not inhibit collecting duct transport nor effect diuresis and natriuresis. Appears to bind to specific receptors that are distinct from the receptors bound by atrial natriuretic peptide and vessel dilator. Possibly enhances protein excretion in urine by decreasing proximal tubular protein reabsorption. May have a role in cardio-renal homeostasis through regulation of natriuresis, diuresis, and vasodilation. In vitro, promotes the production of cGMP and induces vasodilation. May promote natriuresis, at least in part, by enhancing prostaglandin E2 synthesis resulting in the inhibition of renal Na+-K+-ATPase. However reports on the involvement of this peptide in mammal blood volume and blood pressure homeostasis are conflicting; according to a report it is not sufficient to activate cGMP and does not inhibit collecting duct transport nor effect diuresis and natriuresis. Appears to bind to specific receptors that are distinct from the receptors bound by the atrial natriuretic and long-acting natriuretic peptides. Possibly functions in protein excretion in urine by maintaining the integrity of the proximal tubules and enhancing protein excretion by decreasing proximal tubular protein reabsorption. Its function is as follows. May have a role in cardio-renal homeostasis through regulation of diuresis and inhibiting aldosterone synthesis. In vitro, promotes the production of cGMP and induces vasodilation. May promote natriuresis, at least in part, by enhancing prostaglandin E2 synthesis resulting in the inhibition of renal Na+-K+-ATPase. May have a role in potassium excretion but not sodium excretion (natriuresis). Possibly enhances protein excretion in urine by decreasing proximal tubular protein reabsorption. In terms of biological role, hormone produced in the kidneys that appears to be important for maintaining cardio-renal homeostasis. Mediates vasodilation, natriuresis and diuresis primarily in the renal system, in order to maintain the extracellular fluid volume and control the fluid-electrolyte balance. Specifically binds and stimulates cGMP production by renal transmembrane receptors, likely NPR1. Urodilatin not ANP, may be the natriuretic peptide responsible for the regulation of sodium and water homeostasis in the kidney. Functionally, may have a role in cardio-renal homeostasis through regulation of natriuresis and vasodilation. In vivo promotes natriuresis and in vitro, vasodilates renal artery strips. May have a role in cardio-renal homeostasis through regulation of regulation of natriuresis and vasodilation. In vivo promotes natriuresis. In vitro, vasodilates intestinal smooth muscle but not smooth muscle strips. Its function is as follows. May have a role in cardio-renal homeostasis through regulation of natriuresis and vasodilation. In vivo promotes natriuresis. In vitro, selectively vasodilates intestinal and vascular smooth muscle strips. In terms of biological role, may have a role in cardio-renal homeostasis through regulation of natriuresis and vasodilation. In vivo promotes natriuresis. In vitro, selectively vasodilates intestinal smooth muscle but not vascular smooth muscle strips. The polypeptide is Natriuretic peptides A (NPPA) (Cavia porcellus (Guinea pig)).